We begin with the raw amino-acid sequence, 643 residues long: Threonine--tRNA ligase (643 aa).

One can recognise a TGS domain in the interval 1-61; it reads MPIITLPDGS…EQDATLEIIT (61 aa). The catalytic stretch occupies residues 243 to 534; it reads DHRKIGKALD…ITEEYAGFFP (292 aa). Positions 334, 385, and 511 each coordinate Zn(2+).

This sequence belongs to the class-II aminoacyl-tRNA synthetase family. Homodimer. It depends on Zn(2+) as a cofactor.

The protein localises to the cytoplasm. The enzyme catalyses tRNA(Thr) + L-threonine + ATP = L-threonyl-tRNA(Thr) + AMP + diphosphate + H(+). Functionally, catalyzes the attachment of threonine to tRNA(Thr) in a two-step reaction: L-threonine is first activated by ATP to form Thr-AMP and then transferred to the acceptor end of tRNA(Thr). Also edits incorrectly charged L-seryl-tRNA(Thr). In Haemophilus influenzae (strain 86-028NP), this protein is Threonine--tRNA ligase.